The primary structure comprises 36 residues: Photosystem I reaction center subunit VIII (36 aa).

The helical transmembrane segment at 9-29 threads the bilayer; sequence ILVPLVGLVFPAIAMASLFLY.

This sequence belongs to the PsaI family.

It is found in the plastid. Its subcellular location is the chloroplast thylakoid membrane. In terms of biological role, may help in the organization of the PsaL subunit. This is Photosystem I reaction center subunit VIII from Oltmannsiellopsis viridis (Marine flagellate).